A 126-amino-acid chain; its full sequence is uncharacterized protein (126 aa).

This is an uncharacterized protein from Acanthamoeba polyphaga mimivirus (APMV).